We begin with the raw amino-acid sequence, 1597 residues long: Pentafunctional AROM polypeptide (1597 aa).

The tract at residues Met-1–Asn-384 is 3-dehydroquinate synthase. NAD(+)-binding positions include Asp-44 to Asn-46, Glu-81 to Lys-84, Gly-114 to Val-116, and Asp-119. Arg-130 contributes to the 7-phospho-2-dehydro-3-deoxy-D-arabino-heptonate binding site. Thr-139–Thr-140 lines the NAD(+) pocket. 7-phospho-2-dehydro-3-deoxy-D-arabino-heptonate contacts are provided by Asp-146 and Lys-152. Lys-161 contributes to the NAD(+) binding site. Position 162 (Asn-162) interacts with 7-phospho-2-dehydro-3-deoxy-D-arabino-heptonate. Residues Phe-179–Thr-182 and Asn-190 each bind NAD(+). Glu-194 serves as a coordination point for Zn(2+). Residues Glu-194–Lys-197 and Lys-250 contribute to the 7-phospho-2-dehydro-3-deoxy-D-arabino-heptonate site. Glu-260 serves as the catalytic Proton acceptor; for 3-dehydroquinate synthase activity. Residues Arg-264 to Asn-268 and His-271 contribute to the 7-phospho-2-dehydro-3-deoxy-D-arabino-heptonate site. Zn(2+) is bound at residue His-271. His-275 serves as the catalytic Proton acceptor; for 3-dehydroquinate synthase activity. Positions 287 and 356 each coordinate 7-phospho-2-dehydro-3-deoxy-D-arabino-heptonate. A Zn(2+)-binding site is contributed by His-287. Positions Val-397 to Val-842 are EPSP synthase. The active-site For EPSP synthase activity is Cys-824. A shikimate kinase region spans residues Ala-866 to Ser-1057. Gly-872–Thr-879 contacts ATP. The segment at Leu-1058–Glu-1278 is 3-dehydroquinase. His-1181 acts as the Proton acceptor; for 3-dehydroquinate dehydratase activity in catalysis. Lys-1209 functions as the Schiff-base intermediate with substrate; for 3-dehydroquinate dehydratase activity in the catalytic mechanism. The interval Ser-1291–Thr-1597 is shikimate dehydrogenase.

This sequence in the N-terminal section; belongs to the sugar phosphate cyclases superfamily. Dehydroquinate synthase family. In the 2nd section; belongs to the EPSP synthase family. It in the 3rd section; belongs to the shikimate kinase family. The protein in the 4th section; belongs to the type-I 3-dehydroquinase family. This sequence in the C-terminal section; belongs to the shikimate dehydrogenase family. Homodimer. The cofactor is Zn(2+).

The protein resides in the cytoplasm. It catalyses the reaction 7-phospho-2-dehydro-3-deoxy-D-arabino-heptonate = 3-dehydroquinate + phosphate. The catalysed reaction is 3-dehydroquinate = 3-dehydroshikimate + H2O. The enzyme catalyses shikimate + NADP(+) = 3-dehydroshikimate + NADPH + H(+). It carries out the reaction shikimate + ATP = 3-phosphoshikimate + ADP + H(+). It catalyses the reaction 3-phosphoshikimate + phosphoenolpyruvate = 5-O-(1-carboxyvinyl)-3-phosphoshikimate + phosphate. It functions in the pathway metabolic intermediate biosynthesis; chorismate biosynthesis; chorismate from D-erythrose 4-phosphate and phosphoenolpyruvate: step 2/7. It participates in metabolic intermediate biosynthesis; chorismate biosynthesis; chorismate from D-erythrose 4-phosphate and phosphoenolpyruvate: step 3/7. The protein operates within metabolic intermediate biosynthesis; chorismate biosynthesis; chorismate from D-erythrose 4-phosphate and phosphoenolpyruvate: step 4/7. Its pathway is metabolic intermediate biosynthesis; chorismate biosynthesis; chorismate from D-erythrose 4-phosphate and phosphoenolpyruvate: step 5/7. It functions in the pathway metabolic intermediate biosynthesis; chorismate biosynthesis; chorismate from D-erythrose 4-phosphate and phosphoenolpyruvate: step 6/7. Functionally, the AROM polypeptide catalyzes 5 consecutive enzymatic reactions in prechorismate polyaromatic amino acid biosynthesis. The protein is Pentafunctional AROM polypeptide of Blastomyces gilchristii (strain SLH14081) (Blastomyces dermatitidis).